The primary structure comprises 821 residues: Kinetochore protein SLK19 (821 aa).

Disordered regions lie at residues 1–52 and 99–153; these read MNEV…SQFV and FDDK…NDKE. A Phosphothreonine; by CDC28 modification is found at threonine 7. Residues 15–51 are compositionally biased toward polar residues; it reads QAQQREQNSENCSQERNPRTFNSEPDSSFNSPGSSQF. Composition is skewed to basic and acidic residues over residues 99–122 and 136–153; these read FDDK…DKHV and SSEK…NDKE. Residues serine 188 and serine 189 each carry the phosphoserine modification. The residue at position 201 (serine 201) is a Phosphoserine; by CDC28. Serine 216 is subject to Phosphoserine. Threonine 273 is modified (phosphothreonine). Disordered stretches follow at residues 274–298 and 699–720; these read PLYE…DDNQ and EQNN…RDDE. The residue at position 283 (serine 283) is a Phosphoserine. A coiled-coil region spans residues 310-821; that stretch reads AKRNEELTDQ…LLKLLENEKK (512 aa).

Cleaved by ESP1 at the onset of anaphase. Post-translationally, phosphorylated by CDC5/Polo-like kinase at the onset of anaphase. Phosphorylation takes places at proximity to cleavage sites and is required for an efficient cleavage by ESP1. Phosphorylated also by CDC28.

The protein localises to the chromosome. The protein resides in the centromere. It is found in the kinetochore. Its subcellular location is the cytoplasm. It localises to the cytoskeleton. The protein localises to the microtubule organizing center. The protein resides in the spindle pole body. In terms of biological role, has a role in spindle assembly and stability. Required to ensure a timely exit form mitosis. Essential to maintain pre-anaphase spindle polarity. Associates to the plus ends of the microtubules at the kinetochore and spindle midzone. A component of the FEAR (CDC14 Early Anaphase Release) network which promotes CDC14 release from the nucleolus during early anaphase. Required for proper chromosome segregation during meiosis I where it prevents premature sister chromatid separation. The sequence is that of Kinetochore protein SLK19 (SLK19) from Saccharomyces cerevisiae (strain ATCC 204508 / S288c) (Baker's yeast).